A 72-amino-acid polypeptide reads, in one-letter code: uncharacterized protein (72 aa).

The chain crosses the membrane as a helical span at residues 11-31; the sequence is WCCTVLSAFGVVILSVIAHLF.

It localises to the membrane. This is an uncharacterized protein from Saccharomyces cerevisiae (strain ATCC 204508 / S288c) (Baker's yeast).